We begin with the raw amino-acid sequence, 213 residues long: RNA chaperone ProQ (213 aa).

A disordered region spans residues 105 to 150; the sequence is ESQEKAKAKRAAQTPKAAPAGKAPAKKAPKKVAVPARKTERPAKAA. Residues 115–127 show a composition bias toward low complexity; sequence AAQTPKAAPAGKA.

Belongs to the ProQ family.

It localises to the cytoplasm. RNA chaperone with significant RNA binding, RNA strand exchange and RNA duplexing activities. This Shewanella oneidensis (strain ATCC 700550 / JCM 31522 / CIP 106686 / LMG 19005 / NCIMB 14063 / MR-1) protein is RNA chaperone ProQ.